The sequence spans 325 residues: MSRPSSTGPSANKPCSKQPPPPQTPHAPSPAAPPAAATISAAGPGSSAVPAAAAVISGPGAGGGAGPVSPQHHELTSLFECPVCFDYVLPPILQCQAGHLVCNQCRQKLSCCPTCRGALTPSIRNLAMEKVASAVLFPCKYATTGCSLTLHHTEKPEHEDICEYRPYSCPCPGASCKWQGSLEAVMSHLMHAHKSITTLQGEDIVFLATDINLPGAVDWVMMQSCFGHHFMLVLEKQEKYEGHQQFFAIVLLIGTRKQAENFAYRLELNGNRRRLTWEATPRSIHDGVAAAIMNSDCLVFDTAIAHLFADNGNLGINVTISTCCQ.

A compositionally biased stretch (polar residues) spans 1-15 (MSRPSSTGPSANKPC). The segment at 1 to 43 (MSRPSSTGPSANKPCSKQPPPPQTPHAPSPAAPPAAATISAAG) is disordered. Ser-6 carries the phosphoserine modification. Ser-16 is subject to Phosphoserine; by DYRK2. The segment covering 17 to 33 (KQPPPPQTPHAPSPAAP) has biased composition (pro residues). Thr-24 is modified (phosphothreonine; by MAPK14). Phosphoserine; by DYRK2 and MAPK14 is present on Ser-29. Residues 34-43 (PAAATISAAG) are compositionally biased toward low complexity. Ser-69 carries the phosphoserine; by DYRK2 modification. Residues 81–116 (CPVCFDYVLPPILQCQAGHLVCNQCRQKLSCCPTCR) form an RING-type zinc finger. Thr-120 is subject to Phosphothreonine; by DYRK2. The segment at 131–323 (VASAVLFPCK…LGINVTISTC (193 aa)) is SBD. An SIAH-type zinc finger spans residues 134–194 (AVLFPCKYAT…VMSHLMHAHK (61 aa)). Zn(2+) contacts are provided by Cys-139, Cys-146, His-158, Cys-162, Cys-169, Cys-176, His-188, and His-193.

It belongs to the SINA (Seven in absentia) family. Homodimer. Interacts with VAV1, without mediating its ubiquitin-mediated degradation. Probable component of some large E3 complex possibly composed of UBE2D1, SIAH2, CACYBP/SIP, SKP1, APC and TBL1X. Interacts with UBE2I. Interacts with UBE2E2. Interacts with PEG10, which may inhibit its activity. Interacts with PEG3 and EGLN2. Interacts with DYRK2. Interacts with SNCAIP. Interacts with NR1D1 and NR1D2. Interacts with DCC. Interacts with AXIN1. Phosphorylated at Thr-24 and Ser-29 by MAPK14, which mediates the degradation by the proteasome of EGLN3. Phosphorylated at Ser-29 by DYRK2; this increases the ubiquitin ligase activity and promotes degradation of EGLN3. In terms of tissue distribution, detected in brain (at protein level).

The protein resides in the cytoplasm. It localises to the nucleus. The enzyme catalyses S-ubiquitinyl-[E2 ubiquitin-conjugating enzyme]-L-cysteine + [acceptor protein]-L-lysine = [E2 ubiquitin-conjugating enzyme]-L-cysteine + N(6)-ubiquitinyl-[acceptor protein]-L-lysine.. Its pathway is protein modification; protein ubiquitination. Functionally, E3 ubiquitin-protein ligase that mediates ubiquitination and subsequent proteasomal degradation of target proteins. E3 ubiquitin ligases accept ubiquitin from an E2 ubiquitin-conjugating enzyme in the form of a thioester and then directly transfers the ubiquitin to targeted substrates. Mediates E3 ubiquitin ligase activity either through direct binding to substrates or by functioning as the essential RING domain subunit of larger E3 complexes. Mediates ubiquitination and proteasomal degradation of DYRK2 in response to hypoxia. Promotes monoubiquitination of SNCA. Triggers the ubiquitin-mediated degradation of many substrates, including proteins involved in transcription regulation (GPS2, POU2AF1, PML, NCOR1), a cell surface receptor (DCC), an antiapoptotic protein (BAG1), and a protein involved in synaptic vesicle function in neurons (SYP). It is thereby involved in apoptosis, tumor suppression, cell cycle, transcription and signaling processes. Has some overlapping function with SIAH1. Triggers the ubiquitin-mediated degradation of TRAF2, whereas SIAH1 does not. Regulates cellular clock function via ubiquitination of circadian transcriptional repressors NR1D1 and NR1D2 leading to their proteasomal degradation. Plays an important role in mediating the rhythmic degradation/clearance of NR1D1 and NR1D2 contributing to their circadian profile of protein abundance. Mediates ubiquitination and degradation of EGLN2 and EGLN3 in response to the unfolded protein response (UPR), leading to their degradation and subsequent stabilization of ATF4. Also part of the Wnt signaling pathway in which it mediates the Wnt-induced ubiquitin-mediated proteasomal degradation of AXIN1. In Rattus norvegicus (Rat), this protein is E3 ubiquitin-protein ligase SIAH2 (Siah2).